The primary structure comprises 324 residues: Cytochrome c biogenesis protein CcsA (324 aa).

The next 8 membrane-spanning stretches (helical) occupy residues 15-35 (FSIVCIVITIHLITLLIDEII), 44-64 (GMIATFLCITVLLVTRCIYSG), 71-91 (LYESLIFLSWSLSFIHIVPYF), 98-118 (LSTITASSVIFTQGFATSGLL), 143-163 (MILGYAALLCGSLLSVALLVL), 228-248 (VISLGFIFLTIGILSGAVWAN), 255-275 (WNWDPKETWAFITWIVFAVYL), and 289-309 (AIVASMGFLIIWICYFGVNLL).

It belongs to the CcmF/CycK/Ccl1/NrfE/CcsA family. May interact with Ccs1.

It is found in the plastid. Its subcellular location is the chloroplast thylakoid membrane. Its function is as follows. Required during biogenesis of c-type cytochromes (cytochrome c6 and cytochrome f) at the step of heme attachment. The protein is Cytochrome c biogenesis protein CcsA of Daucus carota (Wild carrot).